A 330-amino-acid polypeptide reads, in one-letter code: MQGSVTEFLKPRLVDIEQISSTHAKVTLEPLERGFGHTLGNALRRILLSSMPGCAVTEVEIEGVLHEYSTKEGVQEDILEILLNLKGLAVRVAEGKDEVFITLNKSGSGPVVAGDITHDGDVEIANPEHVICHLTDDNAEIAMRIKVERGRGYVPASARIHTEEDERPIGRLLVDATYSPVDKIAYAVEAARVEQRTDLDKLVIDMETNGTLEPEEAIRRAATILAEQLDAFVDLRDVRVPEEKEEKPEFDPILLRPVDDLELTVRSANCLKAEAIHYIGDLVQRTEVELLKTPNLGKKSLTEIKDVLASRGLSLGMRLENWPPASIAED.

Residues methionine 1–arginine 236 are alpha N-terminal domain (alpha-NTD). The tract at residues phenylalanine 250–aspartate 330 is alpha C-terminal domain (alpha-CTD).

This sequence belongs to the RNA polymerase alpha chain family. Homodimer. The RNAP catalytic core consists of 2 alpha, 1 beta, 1 beta' and 1 omega subunit. When a sigma factor is associated with the core the holoenzyme is formed, which can initiate transcription.

It carries out the reaction RNA(n) + a ribonucleoside 5'-triphosphate = RNA(n+1) + diphosphate. Functionally, DNA-dependent RNA polymerase catalyzes the transcription of DNA into RNA using the four ribonucleoside triphosphates as substrates. This Vibrio vulnificus (strain CMCP6) protein is DNA-directed RNA polymerase subunit alpha.